The chain runs to 113 residues: Crustacean hyperglycemic hormones B (113 aa).

A signal peptide spans 1-26 (MVAFRMMSMALLVVVASSWWASPVEA). 3 cysteine pairs are disulfide-bonded: cysteine 46/cysteine 82, cysteine 62/cysteine 78, and cysteine 65/cysteine 91. At valine 111 the chain carries Valine amide.

Belongs to the arthropod CHH/MIH/GIH/VIH hormone family. As to expression, expressed at a constant level in the eyestalks of juveniles and mature females. A low level expression is seen in the central nervous system.

It is found in the secreted. Functionally, hormone found in the sinus gland of isopods and decapods which controls the blood sugar level. Has a secretagogue action over the amylase released from the midgut gland. May act as a stress hormone and may be involved in the control of molting and reproduction. The protein is Crustacean hyperglycemic hormones B of Metapenaeus ensis (Greasyback shrimp).